The following is a 581-amino-acid chain: Probable bifunctional SAT/APS kinase 2 (581 aa).

The tract at residues 1–200 (MSGFVVWFTG…AAGGARGLIA (200 aa)) is adenylsulfate kinase. 10-17 (GLSGAGKS) provides a ligand contact to ATP. The active-site Phosphoserine intermediate is S84. Residues 201–581 (PHGGELVNRW…ILIESMRSSS (381 aa)) are sulfate adenylyltransferase.

It in the N-terminal section; belongs to the APS kinase family. In the C-terminal section; belongs to the sulfate adenylyltransferase family.

The enzyme catalyses sulfate + ATP + H(+) = adenosine 5'-phosphosulfate + diphosphate. It carries out the reaction adenosine 5'-phosphosulfate + ATP = 3'-phosphoadenylyl sulfate + ADP + H(+). Its pathway is sulfur metabolism; hydrogen sulfide biosynthesis; sulfite from sulfate: step 1/3. The protein operates within sulfur metabolism; hydrogen sulfide biosynthesis; sulfite from sulfate: step 2/3. The chain is Probable bifunctional SAT/APS kinase 2 (sat2/cysC2) from Sorangium cellulosum (strain So ce56) (Polyangium cellulosum (strain So ce56)).